The following is a 589-amino-acid chain: MPTVSVKRDLLFQALGRTYTDEEFDELCFEFGLELDEITSEKQIISKEQGHGKAQGASDVVLYKIDVPANRYDLLCLEGLARGLQVFKERIKAPVYKRVMPKGDIQKLVITEETAKVRPFAVAAVLRNIKFTKDRYDSFIELQEKLHQNICRKRALVAIGTHDLDTLSGPFTYTAKRPSDIKFKPLNKTKEYTACELMNIYKTDNHLKHYLHIIESKPLYPVIYDSNGVVLSMPPIINGNHSKITVNTRNIFIECTGTDFTKAKIVLDIIVTMFSEHCENQFTVEAVEVVSPNGKSSTFPELPYRKEMVRADLINKKVGIRETPANLAKLLTRMCLKSEVIGDGNQIEVEIPPTRADVIHACDIVEDAAIAYGYNNIQMTLPKTYTIANQFPLNKLTELLRLDMAAAGFTEALTFALCSQEDIADKLGLDISATKAVHISNPKTAEFQVARTTLLPGLLKTIAANRKMPLPLKLFEISDVVVKDSGKDVGAKNYRHLCAVYYNKTPGFEIIHGLLDRIMQLLDVPPGEESGGYMIKASAGSAFFPGRCAEIFVGGQSIGKLGVLHPDVITKFELTMPCSSLEINIEPFL.

The 78-residue stretch at 302–379 folds into the B5 domain; sequence LPYRKEMVRA…IAYGYNNIQM (78 aa). Positions 357, 363, 366, and 367 each coordinate Mg(2+).

The protein belongs to the phenylalanyl-tRNA synthetase beta subunit family. Type 2 subfamily. As to quaternary structure, heterotetramer; dimer of two heterodimers formed by FARSA and FARSB. Mg(2+) serves as cofactor.

The protein localises to the cytoplasm. The catalysed reaction is tRNA(Phe) + L-phenylalanine + ATP = L-phenylalanyl-tRNA(Phe) + AMP + diphosphate + H(+). This chain is Phenylalanine--tRNA ligase beta subunit (Farsb), found in Mus musculus (Mouse).